A 247-amino-acid chain; its full sequence is Uridylate kinase (247 aa).

21-24 (KVSG) is a binding site for ATP. A UMP-binding site is contributed by glycine 63. ATP-binding residues include glycine 64 and arginine 68. UMP-binding positions include aspartate 83 and 144–151 (TGNPFCTT). Residues threonine 171, glutamine 172, tyrosine 177, and aspartate 180 each contribute to the ATP site.

It belongs to the UMP kinase family. In terms of assembly, homohexamer.

It is found in the cytoplasm. It catalyses the reaction UMP + ATP = UDP + ADP. It participates in pyrimidine metabolism; CTP biosynthesis via de novo pathway; UDP from UMP (UMPK route): step 1/1. Inhibited by UTP. Catalyzes the reversible phosphorylation of UMP to UDP. This Rickettsia rickettsii (strain Sheila Smith) protein is Uridylate kinase.